Here is a 562-residue protein sequence, read N- to C-terminus: Arginine--tRNA ligase 1 (562 aa).

Residues 122 to 132 (PNIAKPFSMGH) carry the 'HIGH' region motif.

This sequence belongs to the class-I aminoacyl-tRNA synthetase family. In terms of assembly, monomer.

Its subcellular location is the cytoplasm. It carries out the reaction tRNA(Arg) + L-arginine + ATP = L-arginyl-tRNA(Arg) + AMP + diphosphate. This is Arginine--tRNA ligase 1 from Bacillus thuringiensis subsp. konkukian (strain 97-27).